A 544-amino-acid chain; its full sequence is Chromosomal replication initiator protein DnaA (544 aa).

A domain I, interacts with DnaA modulators region spans residues 1 to 71 (MNDFWQHCSA…ADMARDFWHT (71 aa)). Positions 71–207 (TPIDVQFVLD…GETDSMYERS (137 aa)) are domain II. Residues 90 to 105 (AAAPAPASARPASAPG) show a composition bias toward low complexity. Disordered regions lie at residues 90 to 111 (AAAPAPASARPASAPGSMGGSA) and 180 to 203 (AAARRTWRPGQSAGSNGNGETDSM). Residues 191 to 200 (SAGSNGNGET) show a composition bias toward polar residues. The tract at residues 208–424 (KLNPVLTFDN…GALRKILAYS (217 aa)) is domain III, AAA+ region. ATP contacts are provided by Gly252, Gly254, Lys255, and Thr256. Positions 425–544 (KFHGREITIE…LHVLEQTLKG (120 aa)) are domain IV, binds dsDNA.

Belongs to the DnaA family. In terms of assembly, oligomerizes as a right-handed, spiral filament on DNA at oriC.

The protein resides in the cytoplasm. Plays an essential role in the initiation and regulation of chromosomal replication. ATP-DnaA binds to the origin of replication (oriC) to initiate formation of the DNA replication initiation complex once per cell cycle. Binds the DnaA box (a 9 base pair repeat at the origin) and separates the double-stranded (ds)DNA. Forms a right-handed helical filament on oriC DNA; dsDNA binds to the exterior of the filament while single-stranded (ss)DNA is stabiized in the filament's interior. The ATP-DnaA-oriC complex binds and stabilizes one strand of the AT-rich DNA unwinding element (DUE), permitting loading of DNA polymerase. After initiation quickly degrades to an ADP-DnaA complex that is not apt for DNA replication. Binds acidic phospholipids. The polypeptide is Chromosomal replication initiator protein DnaA (Paraburkholderia xenovorans (strain LB400)).